Reading from the N-terminus, the 406-residue chain is Lysine-specific demethylase 8 (406 aa).

Residues 143-152 (KAERSEEPFS) show a composition bias toward basic and acidic residues. The segment at 143 to 162 (KAERSEEPFSKKRKHDCKSE) is disordered. The region spanning 270-406 (DQVPELKEDI…LSFSVSFWWS (137 aa)) is the JmjC domain. Positions 311 and 313 each coordinate Fe cation.

Fe(2+) is required as a cofactor.

The protein resides in the nucleus. It carries out the reaction N(6),N(6)-dimethyl-L-lysyl(36)-[histone H3] + 2 2-oxoglutarate + 2 O2 = L-lysyl(36)-[histone H3] + 2 formaldehyde + 2 succinate + 2 CO2. Functionally, histone demethylase required for G2/M phase cell cycle progression. Specifically demethylates dimethylated 'Lys-36' (H3K36me2) of histone H3, an epigenetic repressive mark, thereby acting as a transcription activator. May play a role in the regulation of the circadian clock. This chain is Lysine-specific demethylase 8 (kdm8), found in Danio rerio (Zebrafish).